The sequence spans 348 residues: Zinc finger protein 843 (348 aa).

A C2H2-type 1 zinc finger spans residues 33–55; the sequence is CKCKACGRGFTQSASLLQHWRVH. The C2H2-type 2; degenerate zinc-finger motif lies at 145-167; it reads FCCCSCGDSVNEKTSLSQRVLPH. A compositionally biased stretch (polar residues) spans 184-195; sequence APSSVAPDSTSG. 2 disordered regions span residues 184-203 and 256-329; these read APSS…GSPG and ATQP…WRGA.

In Homo sapiens (Human), this protein is Zinc finger protein 843 (ZNF843).